Reading from the N-terminus, the 361-residue chain is Putative agmatine deiminase (361 aa).

Catalysis depends on C354, which acts as the Amidino-cysteine intermediate.

Belongs to the agmatine deiminase family.

The enzyme catalyses agmatine + H2O = N-carbamoylputrescine + NH4(+). This chain is Putative agmatine deiminase, found in Streptococcus pneumoniae (strain ATCC BAA-255 / R6).